A 197-amino-acid polypeptide reads, in one-letter code: Gene 49 protein (197 aa).

2 disordered regions span residues 1–49 and 114–157; these read MRGN…EVRP and FANL…RFCK. Residues 117-135 show a composition bias toward gly residues; sequence LGGGSKPNSGGGGSGGGGQ. A compositionally biased stretch (low complexity) spans 136–146; the sequence is QHQSRAPQQAQ.

The sequence is that of Gene 49 protein (49) from Mycobacterium phage D29 (Mycobacteriophage D29).